We begin with the raw amino-acid sequence, 358 residues long: DnaJ homolog subfamily B member 11 (358 aa).

The signal sequence occupies residues 1-22; the sequence is MAPQNLGTFCLLLLYLIGTVIA. One can recognise a J domain in the interval 25–90; that stretch reads DFYKILGVPR…EKRKQYDTYG (66 aa). The residue at position 188 (threonine 188) is a Phosphothreonine. Asparagine 261 is a glycosylation site (N-linked (GlcNAc...) asparagine).

As to quaternary structure, part of a large chaperone multiprotein complex comprising DNAJB11, HSP90B1, HSPA5, HYOU, PDIA2, PDIA4, PDIA6, PPIB, SDF2L1, UGGT1 and very small amounts of ERP29, but not, or at very low levels, CALR nor CANX. Binds to denatured substrates in an ATP-independent manner. Interacts via the J domain with HSPA5 in an ATP-dependent manner. Contains high-mannose Endo H-sensitive carbohydrates. In terms of processing, cys-169, Cys-171, Cys-193 and Cys-196 form intramolecular disulfide bonds. The preferential partner for each Cys is not known.

The protein localises to the endoplasmic reticulum lumen. Its function is as follows. As a co-chaperone for HSPA5 it is required for proper folding, trafficking or degradation of proteins. Binds directly to both unfolded proteins that are substrates for ERAD and nascent unfolded peptide chains, but dissociates from the HSPA5-unfolded protein complex before folding is completed. May help recruiting HSPA5 and other chaperones to the substrate. Stimulates HSPA5 ATPase activity. It is necessary for maturation and correct trafficking of PKD1. The polypeptide is DnaJ homolog subfamily B member 11 (DNAJB11) (Bos taurus (Bovine)).